The primary structure comprises 321 residues: Sporulation protein cse15 (321 aa).

Coiled coils occupy residues Phe37–Lys70 and Ile108–Leu205. Composition is skewed to basic and acidic residues over residues Gly234–Glu243 and Ala282–Arg293. 2 disordered regions span residues Gly234–Asn253 and Ala274–Arg293.

This Bacillus subtilis (strain 168) protein is Sporulation protein cse15 (cse15).